Consider the following 370-residue polypeptide: 4-hydroxy-3-methylbut-2-en-1-yl diphosphate synthase (flavodoxin) (370 aa).

Cys-265, Cys-268, Cys-300, and Glu-307 together coordinate [4Fe-4S] cluster.

This sequence belongs to the IspG family. Requires [4Fe-4S] cluster as cofactor.

It carries out the reaction (2E)-4-hydroxy-3-methylbut-2-enyl diphosphate + oxidized [flavodoxin] + H2O + 2 H(+) = 2-C-methyl-D-erythritol 2,4-cyclic diphosphate + reduced [flavodoxin]. The protein operates within isoprenoid biosynthesis; isopentenyl diphosphate biosynthesis via DXP pathway; isopentenyl diphosphate from 1-deoxy-D-xylulose 5-phosphate: step 5/6. Converts 2C-methyl-D-erythritol 2,4-cyclodiphosphate (ME-2,4cPP) into 1-hydroxy-2-methyl-2-(E)-butenyl 4-diphosphate. The sequence is that of 4-hydroxy-3-methylbut-2-en-1-yl diphosphate synthase (flavodoxin) from Symbiobacterium thermophilum (strain DSM 24528 / JCM 14929 / IAM 14863 / T).